A 64-amino-acid polypeptide reads, in one-letter code: Lantipeptide Flvbeta.d (64 aa).

A propeptide spans 1 to 31 (MDNNTEKFNELAAIADESELNEMLDENITGA) (cleaved by FlvT). Positions 33-37 (STIQC) form a cross-link, lanthionine (Ser-Cys); by FlvM2. A 2,3-didehydrobutyrine; by FlvM2 mark is found at Thr34 and Thr41. Cross-links (beta-methyllanthionine (Thr-Cys); by FlvM2) lie at residues 44 to 52 (TILSVVFDC), 55 to 58 (TSAC), and 59 to 62 (TPPC). Positions 47 to 53 (SVVFDCC) form a cross-link, lanthionine (Ser-Cys); by FlvM2.

In terms of processing, contains LL-lanthionine, DL-lanthionine, and DL-beta-methyllanthionine, when coepressed in E.coli with the flavecin synthetase FlvM2.

It is found in the secreted. Lanthionine-containing peptide that does probably not show antibacterial activity, since its analog [+2]Flvbeta.d does not show antibacterial activity against M.luteus. Also does not show antibiotic activity when tested with [Del2]Flvalpha.a, an analog of Flvalpha.a, which is encoded by the same operon than Flvbeta.d. The bactericidal activity of lantibiotics is based on depolarization of energized bacterial cytoplasmic membranes, initiated by the formation of aqueous transmembrane pores. This is Lantipeptide Flvbeta.d from Ruminococcus flavefaciens.